The following is a 166-amino-acid chain: Transcriptional repressor NrdR (166 aa).

A zinc finger spans residues 3-34 (CPFCHFVETDVIDTRKLYEGEVIRRRRRCRAC). The ATP-cone domain maps to 49–139 (LMVVKKDGTR…VYRAFTDIGK (91 aa)).

It belongs to the NrdR family. Zn(2+) serves as cofactor.

In terms of biological role, negatively regulates transcription of bacterial ribonucleotide reductase nrd genes and operons by binding to NrdR-boxes. This chain is Transcriptional repressor NrdR, found in Chloroflexus aurantiacus (strain ATCC 29364 / DSM 637 / Y-400-fl).